Consider the following 238-residue polypeptide: DNA damage-regulated autophagy modulator protein 1 (238 aa).

The next 6 helical transmembrane spans lie at 9-29 (AFVP…SYVV), 53-73 (SGIF…TMYT), 91-111 (VFNL…GIVA), 116-136 (LAVP…GVVY), 161-181 (MVIS…ASLI), and 200-220 (VSAI…LTFI).

This sequence belongs to the DRAM/TMEM150 family.

The protein localises to the lysosome membrane. Lysosomal modulator of autophagy that plays a central role in p53/TP53-mediated apoptosis. Not involved in p73/TP73-mediated autophagy. The protein is DNA damage-regulated autophagy modulator protein 1 (DRAM1) of Homo sapiens (Human).